The sequence spans 167 residues: MVDDGTRKALSGIPLLKTKAGPRDKELWVQRLKEEYQALIKYVQNNKASDMDWFRLESNKEGTKWFGKCWYMYNLHKYEFDVEFDIPITYPTTSPEIALPELDGKTAKMYRGGKICLTDHFKPLWARNVPKFGIAHAMALGLAPWLAVEVPDLIEKGVISYQEKGSS.

Residue Cys-116 is the Glycyl thioester intermediate of the active site.

The protein belongs to the ubiquitin-conjugating enzyme family. UFC1 subfamily.

In terms of biological role, E2-like enzyme which forms an intermediate with UFM1 via a thioester linkage. This is Ubiquitin-fold modifier-conjugating enzyme 1 from Anopheles gambiae (African malaria mosquito).